We begin with the raw amino-acid sequence, 74 residues long: MQLFVRAQELHTLEVTGQETVAQIKDHVASLEGIAPEDQVVLLAGSPLEDEATLGQCGVEALTTLEVAGRMLGG.

This sequence belongs to the ubiquitin family.

The chain is Ubiquitin-like protein FUBI (Fau) from Mus spicilegus (Steppe mouse).